A 227-amino-acid polypeptide reads, in one-letter code: 7-cyano-7-deazaguanine synthase (227 aa).

Residue 9 to 19 (LSGGLDSATVL) coordinates ATP. The Zn(2+) site is built by C189, C199, C202, and C205.

Belongs to the QueC family. The cofactor is Zn(2+).

The enzyme catalyses 7-carboxy-7-deazaguanine + NH4(+) + ATP = 7-cyano-7-deazaguanine + ADP + phosphate + H2O + H(+). It participates in purine metabolism; 7-cyano-7-deazaguanine biosynthesis. In terms of biological role, catalyzes the ATP-dependent conversion of 7-carboxy-7-deazaguanine (CDG) to 7-cyano-7-deazaguanine (preQ(0)). This chain is 7-cyano-7-deazaguanine synthase, found in Cupriavidus taiwanensis (strain DSM 17343 / BCRC 17206 / CCUG 44338 / CIP 107171 / LMG 19424 / R1) (Ralstonia taiwanensis (strain LMG 19424)).